Here is a 151-residue protein sequence, read N- to C-terminus: Regulatory protein RecX (151 aa).

Belongs to the RecX family.

The protein localises to the cytoplasm. Modulates RecA activity. The chain is Regulatory protein RecX from Prosthecochloris aestuarii (strain DSM 271 / SK 413).